The following is a 563-amino-acid chain: Cytochrome P450 monooxygenase efuG (563 aa).

A helical transmembrane segment spans residues 10–30; it reads ITSHQWGIGSVFLLISIPLIV. A disordered region spans residues 462 to 482; that stretch reads PDDPQSGPRKDAKKQKAKSDG. C505 contacts heme.

It belongs to the cytochrome P450 family. The cofactor is heme.

Its subcellular location is the membrane. It participates in secondary metabolite biosynthesis; terpenoid biosynthesis. In terms of biological role, cytochrome P450 monooxygenase; part of the gene cluster that mediates the biosynthesis of enfumafungin, a glycosylated fernene-type triterpenoid with potent antifungal activity, mediated by its interaction with beta-1,3-glucan synthase and the fungal cell wall. The pathway begins with the terpene cyclase-glycosyl transferase fusion protein that most likely uses 2,3-oxidosqualene as substrate and catalyzes glycosylation immediately after cyclization. The fernene glycoside then could be processed by the desaturase efuI which catalyzes isomerization of a double bond established by efuA to form the core structure. The latter would then undergo a series of hydroxylations in unknown order at C-2, C-19, C-23 and C-25, which would be catalyzed by two of the three cytochrome P450 monooxygenases efuB, efuG or efuH. The hydroxy-group at C-25 becomes oxidized by the dehydrogenase efuE to enable a spontaneous, non-enzymatic hemiacetal formation with C-23. After hydroxylation at C-2, acetylation by the acetyltransferase efuC takes place. The final steps in enfumafungin biosynthesis require expansion of the 5-membered ring by lactonization via a Baeyer-Villiger reaction mediated by one of the BGC's cytochrome P450 monooxygenases (efuB, efuG or efuH) followed by ring cleavage. This type of reaction would establish a double bond between C-20 and C-21 which could be reduced by the reductase efuL to form the final product. The sequence is that of Cytochrome P450 monooxygenase efuG from Hormonema carpetanum.